The chain runs to 141 residues: uncharacterized protein (141 aa).

This is an uncharacterized protein from Acheta domesticus (House cricket).